The chain runs to 60 residues: uncharacterized protein (60 aa).

Positions 27-50 (VKNNNNNNNNNNNNNNNNNNNNNK) are disordered. The segment covering 29 to 49 (NNNNNNNNNNNNNNNNNNNNN) has biased composition (low complexity).

This is an uncharacterized protein from Dictyostelium discoideum (Social amoeba).